Here is a 276-residue protein sequence, read N- to C-terminus: Large ribosomal subunit protein uL2 (276 aa).

The segment at 212 to 276 (NRHRGIRPQT…KLIISRKKHK (65 aa)) is disordered. Basic residues predominate over residues 257–276 (YKTRKKKASDKLIISRKKHK).

The protein belongs to the universal ribosomal protein uL2 family. As to quaternary structure, part of the 50S ribosomal subunit. Forms a bridge to the 30S subunit in the 70S ribosome.

Functionally, one of the primary rRNA binding proteins. Required for association of the 30S and 50S subunits to form the 70S ribosome, for tRNA binding and peptide bond formation. It has been suggested to have peptidyltransferase activity; this is somewhat controversial. Makes several contacts with the 16S rRNA in the 70S ribosome. This chain is Large ribosomal subunit protein uL2, found in Helicobacter acinonychis (strain Sheeba).